Reading from the N-terminus, the 191-residue chain is Fe/S biogenesis protein NfuA (191 aa).

[4Fe-4S] cluster is bound by residues Cys149 and Cys152.

The protein belongs to the NfuA family. As to quaternary structure, homodimer. It depends on [4Fe-4S] cluster as a cofactor.

Functionally, involved in iron-sulfur cluster biogenesis. Binds a 4Fe-4S cluster, can transfer this cluster to apoproteins, and thereby intervenes in the maturation of Fe/S proteins. Could also act as a scaffold/chaperone for damaged Fe/S proteins. This Buchnera aphidicola subsp. Baizongia pistaciae (strain Bp) protein is Fe/S biogenesis protein NfuA.